Here is a 152-residue protein sequence, read N- to C-terminus: Fibroblast growth factor 1 (152 aa).

Residue Ala-2 is modified to N-acetylalanine. Residues Ala-2–Lys-15 constitute a propeptide that is removed on maturation. Heparin is bound at residue Asn-33. The interval Lys-127–Lys-143 is heparin-binding.

It belongs to the heparin-binding growth factors family. In terms of assembly, monomer. Homodimer. Interacts with FGFR1, FGFR2, FGFR3 and FGFR4. Affinity between fibroblast growth factors (FGFs) and their receptors is increased by heparan sulfate glycosaminoglycans that function as coreceptors. Found in a complex with FGFBP1, FGF1 and FGF2. Interacts with FGFBP1. Part of a Cu(2+)-dependent multiprotein aggregate containing FGF1, S100A13 and SYT1. Interacts with SYT1. Interacts with S100A13. Interacts with LRRC59. Interacts with CSNKA, CSNKB and FIBP. While binding with LRRC59, CSNKA and FIBP seem mutually exclusive, CSNKB and FIBP may cooperatively interact with FGF1. Forms a ternary complex with FGFR1 and ITGAV:ITGB3 and induces the recruitment of PTPN11 to the complex. In terms of processing, in the nucleus, phosphorylated by PKC/PRKCD.

The protein resides in the secreted. It is found in the cytoplasm. Its subcellular location is the cell cortex. The protein localises to the cytosol. It localises to the nucleus. Its function is as follows. Plays an important role in the regulation of cell survival, cell division, angiogenesis, cell differentiation and cell migration. Functions as a potent mitogen in vitro. Acts as a ligand for FGFR1 and integrins. Binds to FGFR1 in the presence of heparin leading to FGFR1 dimerization and activation via sequential autophosphorylation on tyrosine residues which act as docking sites for interacting proteins, leading to the activation of several signaling cascades. Binds to integrin ITGAV:ITGB3. Its binding to integrin, subsequent ternary complex formation with integrin and FGFR1, and the recruitment of PTPN11 to the complex are essential for FGF1 signaling. Induces the phosphorylation and activation of FGFR1, FRS2, MAPK3/ERK1, MAPK1/ERK2 and AKT1. Can induce angiogenesis. The chain is Fibroblast growth factor 1 (FGF1) from Sus scrofa (Pig).